A 145-amino-acid chain; its full sequence is Ribonuclease H (145 aa).

An RNase H type-1 domain is found at 2–143 (SKKEVAIYTD…ADSLARKAII (142 aa)). Mg(2+)-binding residues include Asp11, Glu49, Asp71, and Asp135.

It belongs to the RNase H family. Monomer. Mg(2+) is required as a cofactor.

Its subcellular location is the cytoplasm. The enzyme catalyses Endonucleolytic cleavage to 5'-phosphomonoester.. In terms of biological role, endonuclease that specifically degrades the RNA of RNA-DNA hybrids. In Wolbachia sp. subsp. Drosophila simulans (strain wRi), this protein is Ribonuclease H.